Reading from the N-terminus, the 1940-residue chain is Protein ORF1940 (1940 aa).

4 TPR repeats span residues 119-153 (IKAC…ALQY), 155-186 (FQSL…LQQI), 480-513 (RLPD…GLHG), and 617-652 (GKSM…SPTS). 2 disordered regions span residues 1160–1239 (PSKV…PGAV) and 1519–1571 (KGPS…TVTS). Residues 1164–1185 (QNTTQPSATQNTTTQPTAQNTS) are compositionally biased toward low complexity. Over residues 1186–1200 (LPGATQNTTLPTPSK) the composition is skewed to polar residues. Composition is skewed to low complexity over residues 1201–1235 (VQNT…NTSL), 1521–1539 (PSTT…MTPP), and 1561–1571 (TPGSGSQTVTS). The TPR 5 repeat unit spans residues 1691–1724 (KDLNKSVGTSVVEEAKYNSTLQTYLAGLGIKDLN). The disordered stretch occupies residues 1862–1940 (TTTHHITPPP…AEQAEQVLLI (79 aa)). Positions 1868-1883 (TPPPPPPPPPPPPPPK) are enriched in pro residues. The span at 1884-1894 (TQTITTTTQIT) shows a compositional bias: low complexity. The segment covering 1895–1912 (PPSPPPTPPPPPPPPKSP) has biased composition (pro residues).

This Acidianus convivator (ATV) protein is Protein ORF1940.